Here is a 42-residue protein sequence, read N- to C-terminus: Photosystem I reaction center subunit IX (42 aa).

The chain crosses the membrane as a helical span at residues 7–27; it reads YLSVAPVLATLWFGSLAGLLI.

The protein belongs to the PsaJ family.

Its subcellular location is the plastid. It is found in the chloroplast thylakoid membrane. In terms of biological role, may help in the organization of the PsaE and PsaF subunits. This chain is Photosystem I reaction center subunit IX, found in Chloranthus spicatus (Chulantree).